Consider the following 305-residue polypeptide: Dermonecrotic toxin LiSicTox-alphaII1 (305 aa).

Positions Met-1–Gly-18 are cleaved as a signal peptide. Residues Ala-19–Arg-26 constitute a propeptide that is removed on maturation. His-38 is an active-site residue. Residues Glu-58 and Asp-60 each coordinate Mg(2+). The active-site Nucleophile is the His-74. 2 cysteine pairs are disulfide-bonded: Cys-78–Cys-84 and Cys-80–Cys-223. A Mg(2+)-binding site is contributed by Asp-118.

Belongs to the arthropod phospholipase D family. Class II subfamily. Class IIa sub-subfamily. The cofactor is Mg(2+). As to expression, expressed by the venom gland.

It localises to the secreted. It carries out the reaction an N-(acyl)-sphingosylphosphocholine = an N-(acyl)-sphingosyl-1,3-cyclic phosphate + choline. The enzyme catalyses an N-(acyl)-sphingosylphosphoethanolamine = an N-(acyl)-sphingosyl-1,3-cyclic phosphate + ethanolamine. It catalyses the reaction a 1-acyl-sn-glycero-3-phosphocholine = a 1-acyl-sn-glycero-2,3-cyclic phosphate + choline. The catalysed reaction is a 1-acyl-sn-glycero-3-phosphoethanolamine = a 1-acyl-sn-glycero-2,3-cyclic phosphate + ethanolamine. Dermonecrotic toxins cleave the phosphodiester linkage between the phosphate and headgroup of certain phospholipids (sphingolipid and lysolipid substrates), forming an alcohol (often choline) and a cyclic phosphate. This toxin acts on sphingomyelin (SM) wih high activity. It may also act on ceramide phosphoethanolamine (CPE), lysophosphatidylcholine (LPC) and lysophosphatidylethanolamine (LPE), but not on lysophosphatidylserine (LPS), and lysophosphatidylglycerol (LPG). It acts by transphosphatidylation, releasing exclusively cyclic phosphate products as second products. Shows high hemolytic activity. Causes dermonecrosis, induces inflammatory response, platelet aggregation and increases vessel permeability. Shows no lethality when injected at higher dose into mice. May cause complement-dependent hemolysis as well as in a complement-independent manner. The hemolysis provoked in a complement-independent manner may be composed of several steps. The toxin may bind to erythrocyte membranes, may hydrolyze membrane phospholipids (SM and LPC) thus generating metabolism products that may cause hemolysis, probably by provoking an increase of calcium inside cells. The calcium influx may be due to the opening of L-type calcium channels, since L-type calcium channel blockers inhibit calcium influx. The polypeptide is Dermonecrotic toxin LiSicTox-alphaII1 (Loxosceles intermedia (Brown spider)).